The chain runs to 102 residues: Ribonuclease P protein component 1 (102 aa).

Belongs to the eukaryotic/archaeal RNase P protein component 1 family. As to quaternary structure, consists of a catalytic RNA component and at least 4-5 protein subunits.

Its subcellular location is the cytoplasm. The enzyme catalyses Endonucleolytic cleavage of RNA, removing 5'-extranucleotides from tRNA precursor.. Functionally, part of ribonuclease P, a protein complex that generates mature tRNA molecules by cleaving their 5'-ends. The protein is Ribonuclease P protein component 1 of Archaeoglobus fulgidus (strain ATCC 49558 / DSM 4304 / JCM 9628 / NBRC 100126 / VC-16).